The sequence spans 217 residues: Oxygen regulatory protein NreC (217 aa).

The Response regulatory domain maps to 2–119 (KIVIADDHAV…QLLLAIRTVY (118 aa)). A 4-aspartylphosphate modification is found at Asp-53. Residues 148-213 (TSDPFKILSK…ELVEYALKKK (66 aa)) enclose the HTH luxR-type domain. The H-T-H motif DNA-binding region spans 172–191 (NKEIAEKLFVSVKTVEAHKT).

In terms of processing, phosphorylated by NreB.

It is found in the cytoplasm. Its function is as follows. Member of the two-component regulatory system NreB/NreC involved in the control of dissimilatory nitrate/nitrite reduction in response to oxygen. Phosphorylated NreC binds to a GC-rich palindromic sequence at the promoters of the nitrate (narGHJI) and nitrite (nir) reductase operons, as well as the putative nitrate transporter gene narT, and activates their expression. The polypeptide is Oxygen regulatory protein NreC (nreC) (Staphylococcus aureus (strain bovine RF122 / ET3-1)).